Consider the following 356-residue polypeptide: Alanine racemase, catabolic (356 aa).

Lysine 35 (proton acceptor; specific for D-alanine) is an active-site residue. N6-(pyridoxal phosphate)lysine is present on lysine 35. Substrate is bound at residue arginine 130. Catalysis depends on tyrosine 253, which acts as the Proton acceptor; specific for L-alanine. Methionine 301 serves as a coordination point for substrate.

It belongs to the alanine racemase family. In terms of assembly, monomer. Pyridoxal 5'-phosphate serves as cofactor.

It catalyses the reaction L-alanine = D-alanine. Inactivated by D- and L-beta-fluoroalanine, D- and L-beta-chloroalanine, and O-acetyl-D-serine. Functionally, isomerizes L-alanine to D-alanine which is then oxidized to pyruvate by DadA. The sequence is that of Alanine racemase, catabolic (dadX) from Salmonella typhimurium (strain LT2 / SGSC1412 / ATCC 700720).